We begin with the raw amino-acid sequence, 720 residues long: Polyribonucleotide nucleotidyltransferase (720 aa).

Mg(2+) is bound by residues aspartate 484 and aspartate 490. The KH domain occupies 551 to 610 (PRMYKINIDPSKIGSVIGSGGKTIRSIIEQTNTTVDIENDGTVVIGATDEASAKKAIKII). Residues 620–688 (GSIYTGKVTR…NQGRVNLSHR (69 aa)) enclose the S1 motif domain. Positions 697–720 (PISRNRDSQPRRPGPFRPSDRSNS) are disordered.

Belongs to the polyribonucleotide nucleotidyltransferase family. Mg(2+) serves as cofactor.

It localises to the cytoplasm. It carries out the reaction RNA(n+1) + phosphate = RNA(n) + a ribonucleoside 5'-diphosphate. Functionally, involved in mRNA degradation. Catalyzes the phosphorolysis of single-stranded polyribonucleotides processively in the 3'- to 5'-direction. This is Polyribonucleotide nucleotidyltransferase from Dehalococcoides mccartyi (strain CBDB1).